Consider the following 567-residue polypeptide: MSRISRRAYADMFGPTVGDRVRLADTALWVEVEKDFTVYGEEVKFGGGKVIRDGMGQGQMLAAQAMDLVLTNALIIDHWGIVKADIGVKHGRIAAIGKAGNPDVQPGVTVPVGPGTEVIAAEGKIVTAGGIDSHIHFICPQQVEEALTSGVTTFIGGGTGPATGTNATTCTPGPWYLARMLQAADSLPINIGLLGKGNASRPEALREQIAAGAVGLKLHEDWGSTPAAIDCCLSVAEEMDIQVAIHTDTLNESGCIEDTLAAIGDRTIHTFHTEGAGGGHAPDIIRAAGQANVLPSSTNPTLPYTVNTVDEHLDMLMVCHHLDPSIAEDVAFAESRIRRETIAAEDILHDMGAFAMTSSDSQAMGRVGEVVLRTWQVAHQMKVRRGPLAPDSSYSDNFRVKRYIAKYTLNPALTHGIAHEVGSVEVGKLADLVLWSPAFFAVKPALVIKGGMIVTAPMGDINGSIPTPQPVHYRPMFGALGAARHATRMTFLPQAAMDRGLAQELGLQSLIGVAHGCRRVRKADMVHNTLQPVIEVDSQTYQVRADGELLVCEPASELPLAQRYFLF.

Residues 129–567 (GGIDSHIHFI…LPLAQRYFLF (439 aa)) enclose the Urease domain. Residues H134, H136, and K217 each contribute to the Ni(2+) site. N6-carboxylysine is present on K217. H219 lines the substrate pocket. 2 residues coordinate Ni(2+): H246 and H272. H320 (proton donor) is an active-site residue. D360 contributes to the Ni(2+) binding site.

The protein belongs to the metallo-dependent hydrolases superfamily. Urease alpha subunit family. As to quaternary structure, heterotrimer of UreA (gamma), UreB (beta) and UreC (alpha) subunits. Three heterotrimers associate to form the active enzyme. Ni cation is required as a cofactor. Carboxylation allows a single lysine to coordinate two nickel ions.

The protein resides in the cytoplasm. It catalyses the reaction urea + 2 H2O + H(+) = hydrogencarbonate + 2 NH4(+). It functions in the pathway nitrogen metabolism; urea degradation; CO(2) and NH(3) from urea (urease route): step 1/1. The sequence is that of Urease subunit alpha from Pseudomonas putida (strain W619).